The chain runs to 775 residues: Homoaconitase, mitochondrial (775 aa).

The transit peptide at 1-29 (MQSRLMPSGGPGRRWAFLRVPSTPQRRAF) directs the protein to the mitochondrion. Residues Cys392, Cys461, and Cys464 each contribute to the [4Fe-4S] cluster site.

It belongs to the aconitase/IPM isomerase family. [4Fe-4S] cluster is required as a cofactor.

The protein localises to the mitochondrion. It carries out the reaction (2R,3S)-homoisocitrate = cis-homoaconitate + H2O. The protein operates within amino-acid biosynthesis; L-lysine biosynthesis via AAA pathway; L-alpha-aminoadipate from 2-oxoglutarate: step 3/5. Functionally, catalyzes the reversible hydration of cis-homoaconitate to (2R,3S)-homoisocitrate, a step in the alpha-aminoadipate pathway for lysine biosynthesis. The sequence is that of Homoaconitase, mitochondrial (lys4) from Aspergillus oryzae (strain ATCC 42149 / RIB 40) (Yellow koji mold).